The following is a 474-amino-acid chain: P2X purinoceptor 2 (474 aa).

Residues 1 to 42 (MAATHPKAPTAQRLRQGWSAFWDYETPKVIVVRNRPLGVVYR) are Cytoplasmic-facing. Residues 43–60 (AVQLLILLYFVWYVFIVQ) form a helical membrane-spanning segment. Over 61 to 333 (KSYQDSETGP…IVHGQAGKFS (273 aa)) the chain is Extracellular. K77 and K79 together coordinate ATP. 3 disulfides stabilise this stretch: C121–C172, C132–C155, and C138–C166. Residue N129 is glycosylated (N-linked (GlcNAc...) asparagine). An N-linked (GlcNAc...) asparagine glycan is attached at N190. T192 contacts ATP. The cysteines at positions 222 and 232 are disulfide-linked. N247 carries N-linked (GlcNAc...) asparagine glycosylation. Residues C266 and C275 are joined by a disulfide bond. ATP is bound by residues S292, N296, and R298. N-linked (GlcNAc...) asparagine glycosylation is present at N306. K315 is a binding site for ATP. Residues 316-329 (AYGIRIDVIVHGQA) are pore-forming motif. The helical transmembrane segment at 334 to 354 (LIPTIINLATALTSIGVGSFL) threads the bilayer. Residues 355 to 474 (CDWILLTFMN…PTDPKGLAQL (120 aa)) are Cytoplasmic-facing. The disordered stretch occupies residues 445–474 (PDRCVGQGLPSSESPLQDSTPTDPKGLAQL). The span at 453 to 466 (LPSSESPLQDSTPT) shows a compositional bias: polar residues.

It belongs to the P2X receptor family. As to quaternary structure, homotrimer and heterotrimer; functional P2XRs are organized as homomeric and heteromeric trimers. Homotrimer. Forms heterodimer with P2RX1. Forms heterotrimer with P2RX6. Forms heterotrimer with P2RX3. As to expression, express in organ of Corti.

The protein localises to the cell membrane. The enzyme catalyses Ca(2+)(in) = Ca(2+)(out). The catalysed reaction is K(+)(in) = K(+)(out). It catalyses the reaction Na(+)(in) = Na(+)(out). Its activity is regulated as follows. Fast activation by external ATP. Exhibits slow desensitization during prolonged ATP activation. Not sensitive to the ATP agonist:alpha/beta-methylene-ATP. Its function is as follows. ATP-gated nonselective transmembrane cation channel permeable to potassium, sodium and calcium. Activation by extracellular ATP induces a variety of cellular responses, such as excitatory postsynaptic responses in sensory neurons, neuromuscular junctions (NMJ) formation, hearing, perception of taste and peristalsis. In the inner ear, regulates sound transduction and auditory neurotransmission, outer hair cell electromotility, inner ear gap junctions, and K(+) recycling. Mediates synaptic transmission between neurons and from neurons to smooth muscle. This is P2X purinoceptor 2 (P2RX2) from Cavia porcellus (Guinea pig).